Reading from the N-terminus, the 338-residue chain is Dodecaprenyl-phosphate galacturonate synthase (338 aa).

The next 2 helical transmembrane spans lie at 254-274 (FFGSLGLGLGALAMLILLYLG) and 289-309 (MLMVGVVLLLSSVQMITTGIL).

The protein belongs to the glycosyltransferase 2 family.

Its subcellular location is the cell membrane. It carries out the reaction di-trans,nona-cis-dodecaprenyl phosphate + UDP-alpha-D-galacturonate = beta-D-galacturonosyl di-trans,nona-cis-dodecaprenyl phosphate + UDP. Its function is as follows. Glycosyltransferase that catalyzes the synthesis of dodecaprenyl-phosphate galacturonate (Dod-P-GalA), likely from UDP-GalA and dodecaprenyl-phosphate. Dod-P-GalA is the lipid donor required for GalA transfer to lipopolysaccharide (LPS) specific residues catalyzed by the GalA transferases RgtA, RgtB, RgtC and RgtD. The sequence is that of Dodecaprenyl-phosphate galacturonate synthase from Rhizobium johnstonii (strain DSM 114642 / LMG 32736 / 3841) (Rhizobium leguminosarum bv. viciae).